The chain runs to 24 residues: Caerin-2.1 (24 aa).

This sequence belongs to the frog skin active peptide (FSAP) family. Caerin subfamily. Expressed by the skin dorsal glands.

It is found in the secreted. Its function is as follows. Inhibits the formation of NO by neuronal nitric oxide synthase. This chain is Caerin-2.1, found in Litoria rothii (Roth's tree frog).